Here is a 419-residue protein sequence, read N- to C-terminus: UDP-N-acetylglucosamine 1-carboxyvinyltransferase (419 aa).

A phosphoenolpyruvate-binding site is contributed by 22–23; the sequence is KN. Position 91 (arginine 91) interacts with UDP-N-acetyl-alpha-D-glucosamine. The Proton donor role is filled by cysteine 115. Cysteine 115 bears the 2-(S-cysteinyl)pyruvic acid O-phosphothioketal mark. Residues 120 to 124, 160 to 163, aspartate 305, and isoleucine 327 each bind UDP-N-acetyl-alpha-D-glucosamine; these read RPVDL and KVSV.

Belongs to the EPSP synthase family. MurA subfamily.

Its subcellular location is the cytoplasm. It carries out the reaction phosphoenolpyruvate + UDP-N-acetyl-alpha-D-glucosamine = UDP-N-acetyl-3-O-(1-carboxyvinyl)-alpha-D-glucosamine + phosphate. It participates in cell wall biogenesis; peptidoglycan biosynthesis. Its function is as follows. Cell wall formation. Adds enolpyruvyl to UDP-N-acetylglucosamine. The sequence is that of UDP-N-acetylglucosamine 1-carboxyvinyltransferase from Serratia proteamaculans (strain 568).